The sequence spans 367 residues: Phosphoribosylaminoimidazole-succinocarboxamide synthase (367 aa).

Belongs to the SAICAR synthetase family.

The enzyme catalyses 5-amino-1-(5-phospho-D-ribosyl)imidazole-4-carboxylate + L-aspartate + ATP = (2S)-2-[5-amino-1-(5-phospho-beta-D-ribosyl)imidazole-4-carboxamido]succinate + ADP + phosphate + 2 H(+). It participates in purine metabolism; IMP biosynthesis via de novo pathway; 5-amino-1-(5-phospho-D-ribosyl)imidazole-4-carboxamide from 5-amino-1-(5-phospho-D-ribosyl)imidazole-4-carboxylate: step 1/2. The polypeptide is Phosphoribosylaminoimidazole-succinocarboxamide synthase (Aliivibrio fischeri (strain MJ11) (Vibrio fischeri)).